A 1214-amino-acid chain; its full sequence is Protein argonaute-2 (1214 aa).

A disordered region spans residues 1–412; sequence MGKKDKNKKG…GSIKRGTIGK (412 aa). Low complexity-rich tracts occupy residues 18 to 93 and 107 to 117; these read PQPQ…QQKS and KQQVQGWTKQG. 7 stretches are compositionally biased toward gly residues: residues 118–131, 141–154, 164–177, 187–200, 210–223, 233–246, and 256–269; these read QQGG…GQDG and QQGG…GQEG. Over residues 270–282 the composition is skewed to low complexity; sequence GYQQRPPGQQQGG. Gly residues-rich tracts occupy residues 302-315, 325-338, and 348-361; these read QQGG…GQEG. Over residues 362-394 the composition is skewed to low complexity; sequence GYQQRPPGQQPNQTQSQGQYQSRGPPQQQQAAP. The PAZ domain maps to 608-717; that stretch reads LERFSLKAKI…LPIELCSIEE (110 aa). The tract at residues 681–686 is interaction with guide RNA; the sequence is YFHSRN. Residues 885 to 1186 form the Piwi domain; sequence LAIVIIPQFR…ARGRVYLTGT (302 aa). Residues aspartate 965 and aspartate 1037 each contribute to the a divalent metal cation site. Interaction with guide RNA regions lie at residues 1075-1076, 1119-1127, and 1156-1178; these read KR, HQAIQGTAK, and FPRC…VAAR. Residue histidine 1173 participates in a divalent metal cation binding.

The protein belongs to the argonaute family. Ago subfamily. Interacts with Fmr1, Dcr-1 and vig to form the RNA-induced silencing complex (RISC), a ribonucleoprotein (RNP) complex involved in translation regulation, other components of the complex are RpL5, RpL11 and Rm62. As part of the RISC complex, interacts with Tudor-SN. Interacts with Taf11. As to quaternary structure, (Microbial infection) Interacts with cricket paralysis virus protein 1A; this interaction may block the RISC activity. Mg(2+) serves as cofactor. Mn(2+) is required as a cofactor.

Its subcellular location is the nucleus. It is found in the cytoplasm. It localises to the cytoplasmic ribonucleoprotein granule. In terms of biological role, essential for RNA interference (RNAi); double-stranded RNA induces potent and specific gene silencing. RNAi is mediated by the RNA-induced silencing complex (RISC), a sequence-specific, multicomponent nuclease that destroys or silences messenger RNAs homologous to the silencing trigger. This Drosophila melanogaster (Fruit fly) protein is Protein argonaute-2.